A 405-amino-acid polypeptide reads, in one-letter code: Argininosuccinate synthase (405 aa).

ATP-binding positions include 10-18 (AYSGGLDTS) and Ala-37. 2 residues coordinate L-citrulline: Tyr-88 and Ser-93. Gly-118 is a binding site for ATP. L-aspartate-binding residues include Thr-120, Asn-124, and Asp-125. L-citrulline is bound at residue Asn-124. L-citrulline is bound by residues Arg-128, Ser-179, Ser-188, Glu-264, and Tyr-276.

The protein belongs to the argininosuccinate synthase family. Type 1 subfamily. As to quaternary structure, homotetramer.

The protein resides in the cytoplasm. It carries out the reaction L-citrulline + L-aspartate + ATP = 2-(N(omega)-L-arginino)succinate + AMP + diphosphate + H(+). It functions in the pathway amino-acid biosynthesis; L-arginine biosynthesis; L-arginine from L-ornithine and carbamoyl phosphate: step 2/3. The sequence is that of Argininosuccinate synthase from Nitrosococcus oceani (strain ATCC 19707 / BCRC 17464 / JCM 30415 / NCIMB 11848 / C-107).